Here is a 95-residue protein sequence, read N- to C-terminus: MKITKVAVAGTLESSDVQVRVQPFDSLDIEINSSVAKQFGEQIEATVREVLAKLGITAAQVIVEDKGALDCVLQARVKAAAMRATDEMINWEAVL.

O-(phosphoribosyl dephospho-coenzyme A)serine is present on S14.

The protein belongs to the CitD family. As to quaternary structure, oligomer with a subunit composition of (alpha,beta,gamma)6.

It localises to the cytoplasm. Its function is as follows. Covalent carrier of the coenzyme of citrate lyase. The chain is Citrate lyase acyl carrier protein from Haemophilus influenzae (strain PittGG).